The primary structure comprises 329 residues: Mas-related G-protein coupled receptor member X2 (329 aa).

Topologically, residues 1-33 (MDPTTPAWGTESTTMNGNDQALPLLCGKETMIS) are extracellular. Residues 34 to 54 (VFLILFIALVGLVGNAFVLWL) form a helical membrane-spanning segment. Residues 55–63 (LGFRMRRNA) are Cytoplasmic-facing. Residues 64–84 (FSVYVLSLAGADFLFLCFQMT) traverse the membrane as a helical segment. Over 85-96 (SCLAYLINFFGS) the chain is Extracellular. The helical transmembrane segment at 97–116 (ISINIPSFFTVMTCAYLAGL) threads the bilayer. Residues 117-143 (SMLSAISTERCLSVLWPIWYRCRRPRH) are Cytoplasmic-facing. A helical transmembrane segment spans residues 144–164 (LSAVMCVLLWALSLLLSILEG). The Extracellular portion of the chain corresponds to 165-183 (KFCGFLFSDDDPGWCQTFD). The chain crosses the membrane as a helical span at residues 184–204 (FITAAWLMFLFVVLCGSSLAL). At 205 to 227 (LVRILCGSRSLPLTRLYLTILLT) the chain is on the cytoplasmic side. A helical transmembrane segment spans residues 228–248 (VLIFLLCGLPFGIQWFLILWI). The Extracellular portion of the chain corresponds to 249–263 (WKNSVVLFCHIHPIS). Residues 264-284 (VVLSSFNSSANPIIYFFVGSF) form a helical membrane-spanning segment. Over 285 to 329 (RKQWRLRQPILKLALQRALQDTAEVDHSEGCFSQGTLEMSRSSLV) the chain is Cytoplasmic.

It belongs to the G-protein coupled receptor 1 family. Mas subfamily.

It localises to the cell membrane. Functionally, mast cell-specific receptor for basic secretagogues, i.e. cationic amphiphilic drugs, as well as endo- or exogenous peptides, consisting of a basic head group and a hydrophobic core. Recognizes and binds small molecules containing a cyclized tetrahydroisoquinoline (THIQ), such as non-steroidal neuromuscular blocking drugs (NMBDs), including tubocurarine and atracurium. In response to these compounds, mediates pseudo-allergic reactions characterized by histamine release, inflammation and airway contraction. The chain is Mas-related G-protein coupled receptor member X2 (MRGPRX2) from Macaca mulatta (Rhesus macaque).